A 31-amino-acid polypeptide reads, in one-letter code: Cytochrome b6-f complex subunit 8 (31 aa).

A helical membrane pass occupies residues 5-25; that stretch reads IVSLAWAALMVVFTFSLSLVV.

Belongs to the PetN family. As to quaternary structure, the 4 large subunits of the cytochrome b6-f complex are cytochrome b6, subunit IV (17 kDa polypeptide, PetD), cytochrome f and the Rieske protein, while the 4 small subunits are PetG, PetL, PetM and PetN. The complex functions as a dimer.

The protein resides in the plastid. Its subcellular location is the chloroplast thylakoid membrane. Functionally, component of the cytochrome b6-f complex, which mediates electron transfer between photosystem II (PSII) and photosystem I (PSI), cyclic electron flow around PSI, and state transitions. The protein is Cytochrome b6-f complex subunit 8 of Acorus calamus (Sweet flag).